The chain runs to 689 residues: Transcription factor MYC2 (689 aa).

Residues 94–172 (LQQRLQALID…VLRELNSLIS (79 aa)) are JAZ-interaction domain. Residues 316-349 (NTVQTNSVPSSNSNKQIAYGNENNHPSGNGQSCY) show a composition bias toward polar residues. Disordered regions lie at residues 316–361 (NTVQ…PQQQ) and 420–519 (QSQF…EAER). Residues 350–361 (NQQQQKNPPQQQ) are compositionally biased toward low complexity. The segment covering 471–495 (DSEHSDLEASVVKEADSSRVVEPEK) has biased composition (basic and acidic residues). Residues 496 to 505 (RPRKRGRKPA) are compositionally biased toward basic residues. Residues 506–519 (NGREEPLNHVEAER) are compositionally biased toward basic and acidic residues. Residues 509 to 522 (EEPLNHVEAERQRR) form a basic motif; degenerate region. A bHLH domain is found at 509-558 (EEPLNHVEAERQRREKLNQRFYALRAVVPNVSKMDKASLLGDAISYINEL). The interval 523–558 (EKLNQRFYALRAVVPNVSKMDKASLLGDAISYINEL) is helix-loop-helix motif. The segment at 563-602 (QNTESDKEDLKSQIEDLKKESRRPGPPPPPNQDLKMSSHT) is disordered. Residues 566–585 (ESDKEDLKSQIEDLKKESRR) show a composition bias toward basic and acidic residues.

Interacts (via N-terminus) with MED25. Interacts (via N-terminus) with JAZ7. MED25 and JAZ7 compete with each other to bind to MYC2. Interacts (via N-terminus) with MTB1. MTB1 and MED25 compete with each other to bind to MYC2. In terms of tissue distribution, expressed at low levels in roots, stems, leaves, flowers and fruits.

Its subcellular location is the nucleus. Functionally, transcriptional activator that binds to the G-box motif (5'-AACGTG-3') found in the promoter of the jasmonate-induced gene LAPA1. Acts as a negative regulator of blue light-mediated photomorphogenesis and positively regulates root growth. Promotes growth in response to the phytohormones abscisic acid (ABA) and jasmonate (JA). Binds to the G-box motif (5'-CACGTG-3') of the RBCS-3A gene promoter. Acts downstream of the jasmonate (JA) receptor to orchestrate JA-mediated activation of plant responses. Positively regulates both wound-responsive and pathogen-responsive genes through MYC2-targeted transcription factors (MTFs) involved in early response to JA. With JA2L forms a transcription module that regulates wounding-responsive genes. With ERF.C3 forms a transcription module that regulates pathogen-responsive genes. Plays a critical role in orchestrating JA-mediated defense gene expression during Botrytis cinerea infection. Negatively regulates defense responses to root-knot nematodes, potentially by mediating crosstalk among the hormones strigolactones, abscisic acid (ABA) and jasmonate (JA). Regulates the termination of JA-mediated defense responses by specifically binding the G-box (5'-CACATG-3') motifs in the promoters of MTB1, MTB2 and MTB3, which are transcription factors that negatively regulates JA signaling. May be involved in JA-induced chilling tolerance, possibly by ameliorating the antioxidant enzyme system of fruit and increasing proline and lycopene levels. The protein is Transcription factor MYC2 of Solanum lycopersicum (Tomato).